We begin with the raw amino-acid sequence, 742 residues long: Two pore calcium channel protein 1 (742 aa).

The tract at residues 1–37 (MSEAEAPLITEEAAERGLASSGSRRLSDGAGGQGSRK) is disordered. The Cytoplasmic segment spans residues 1–82 (MSEAEAPLIT…NDTRFGRAMS (82 aa)). A helical membrane pass occupies residues 83–103 (FYFVYLRLDWLWSLNLFALIL). Residues 104–140 (LNFLEKPLWCRKDALQAYDQRDLYFLGQLPYFSKTES) are Extracellular-facing. Residues 141 to 161 (LIYEGLTLVILVMDIFCPLSY) form a helical membrane-spanning segment. Residues 162-176 (EGLNIFWRSTTNKLK) are Cytoplasmic-facing. The helical transmembrane segment at 177 to 197 (IVLLFILACDILVFAFSSQPF) threads the bilayer. Residues 198-204 (RLAPYIR) lie on the Extracellular side of the membrane. A helical; Voltage-sensor membrane pass occupies residues 205–226 (VVFLIMTIRELRMCAITLAGLI). Residues 227 to 247 (GTYLNVLALSLLFLLFASWLA) traverse the membrane as a helical segment. Over 248–258 (YVTFEDTPQGK) the chain is Extracellular. An intramembrane region (pore-forming) is located at residues 259 to 273 (TIFSSYGVTLYQMFV). The Extracellular portion of the chain corresponds to 274–296 (LFTTSNNPDVWVHAYKIPRWYSL). A helical membrane pass occupies residues 297–317 (FFIVYVLLGVYFLTNLILAVI). The Cytoplasmic segment spans residues 318–446 (YDSFKEQFAK…SFVRSRMFEY (129 aa)). EF-hand domains follow at residues 335–370 (IRKN…LNKY) and 376–411 (TSRE…IAIK). Residues 447-467 (IIVFVLLINLVAVIIETTLDI) form a helical membrane-spanning segment. Topologically, residues 468–480 (ENSSSQETWQEVE) are extracellular. N-linked (GlcNAc...) asparagine glycosylation is present at N469. A helical transmembrane segment spans residues 481 to 501 (FFLGWIYVAEMALKIFSLGFG). Residues 502-510 (AYWMEGQNK) are Cytoplasmic-facing. Residues 511-531 (FDFVLTWTIFIGETLTFAFPS) traverse the membrane as a helical segment. Residues 532–540 (KLPFLSNGE) are Extracellular-facing. A helical; Voltage-sensor transmembrane segment spans residues 541–558 (WIRYLLLGRVLRLTRILL). Residues 559-582 (QVQRFRAFVATFFTLMSSLMPYLG) lie on the Cytoplasmic side of the membrane. A helical membrane pass occupies residues 583–603 (IVFCVLCMYCSIGLQIFGGIV). At 604-627 (YAGNPTLEETDLFNNDYLLFNFND) the chain is on the extracellular side. Positions 628 to 642 (YPSGMVTLFNLLVMG) form an intramembrane region, pore-forming. The Extracellular segment spans residues 643–663 (NWQVWMESYWQLTGTSWSLIY). The helical transmembrane segment at 664–684 (FVSFYLISILLLLNLIVAFVL) threads the bilayer. Residues 685–742 (EAFFAEMELEKGEEVDIQNPTSGGIKKRRSMRVRSKGTMVDILLHHMLSNELDGSQNS) are Cytoplasmic-facing.

It belongs to the calcium channel alpha-1 subunit (TC 1.A.1.11) family. Two pore calcium channel subfamily. In terms of assembly, homodimer.

The protein resides in the membrane. With respect to regulation, inhibited by Al(3+). In terms of biological role, functions as a voltage-gated inward-rectifying Ca(2+) channel (VDCC) across the plasma membrane that mediates sucrose-induced Ca(2+) influx in autotrophically grown leaf cells. Acts as the major ROS-responsive Ca(2+) channel and is the possible target of Al-dependent inhibition. Plays a regulatory role in defense responses. In Triticum aestivum (Wheat), this protein is Two pore calcium channel protein 1 (TPC1).